A 422-amino-acid chain; its full sequence is Dihydroorotase (422 aa).

Histidine 59 and histidine 61 together coordinate Zn(2+). Substrate is bound by residues 61-63 (HFR) and asparagine 93. 3 residues coordinate Zn(2+): aspartate 150, histidine 177, and histidine 230. Asparagine 276 serves as a coordination point for substrate. Residue aspartate 303 participates in Zn(2+) binding. The active site involves aspartate 303. Histidine 307 is a binding site for substrate.

The protein belongs to the metallo-dependent hydrolases superfamily. DHOase family. Class I DHOase subfamily. Zn(2+) is required as a cofactor.

It carries out the reaction (S)-dihydroorotate + H2O = N-carbamoyl-L-aspartate + H(+). The protein operates within pyrimidine metabolism; UMP biosynthesis via de novo pathway; (S)-dihydroorotate from bicarbonate: step 3/3. Functionally, catalyzes the reversible cyclization of carbamoyl aspartate to dihydroorotate. The chain is Dihydroorotase from Streptococcus thermophilus (strain CNRZ 1066).